The chain runs to 250 residues: V-type proton ATPase subunit D (250 aa).

It belongs to the V-ATPase D subunit family. In terms of assembly, V-ATPase is a heteromultimeric enzyme made up of two complexes: the ATP-hydrolytic V1 complex and the proton translocation V0 complex. The V1 complex consists of three catalytic AB heterodimers that form a heterohexamer, three peripheral stalks each consisting of EG heterodimers, one central rotor including subunits D and F, and the regulatory subunits C and H. The proton translocation complex V0 consists of the proton transport subunit a, a ring of proteolipid subunits c9c'', rotary subunit d, subunits e and f, and two accessory subunits ATP6AP1/Ac45 and ATP6AP2/PRR.

Subunit of the V1 complex of vacuolar(H+)-ATPase (V-ATPase), a multisubunit enzyme composed of a peripheral complex (V1) that hydrolyzes ATP and a membrane integral complex (V0) that translocates protons. V-ATPase is responsible for acidifying and maintaining the pH of intracellular compartments and in some cell types, is targeted to the plasma membrane, where it is responsible for acidifying the extracellular environment. The protein is V-type proton ATPase subunit D (VATPD) of Suberites domuncula (Sponge).